A 307-amino-acid polypeptide reads, in one-letter code: Replication termination factor 2 (307 aa).

Residues Ala193 to Ser296 form a disordered region. Over residues Gly227–Ser241 the composition is skewed to basic and acidic residues. Ser288 is subject to Phosphoserine.

The protein belongs to the rtf2 family. As to quaternary structure, interacts with DDI2; probably also interacts with DDI1. Post-translationally, undergoes proteasomal degradation, via DDI1 and DDI2. Removal from stalled replisomes and degradation are required for genome stability.

The protein localises to the chromosome. Replication termination factor which is a component of the elongating replisome. Required for ATR pathway signaling upon DNA damage and has a positive activity during DNA replication. Might function to facilitate fork pausing at replication fork barriers like the rDNA. May be globally required to stimulate ATR signaling after the fork stalls or encounters a lesion. Interacts with nascent DNA. This chain is Replication termination factor 2, found in Mus musculus (Mouse).